A 109-amino-acid polypeptide reads, in one-letter code: Nucleoid-associated protein VIBHAR_03086 (109 aa).

Disordered regions lie at residues 1–21 (MFGKGGMGNLMKQAQQMQDRM) and 88–109 (QKEKMASVTGGMQLPPGMKMPF).

This sequence belongs to the YbaB/EbfC family. Homodimer.

It is found in the cytoplasm. The protein resides in the nucleoid. In terms of biological role, binds to DNA and alters its conformation. May be involved in regulation of gene expression, nucleoid organization and DNA protection. This is Nucleoid-associated protein VIBHAR_03086 from Vibrio campbellii (strain ATCC BAA-1116).